We begin with the raw amino-acid sequence, 84 residues long: Small ribosomal subunit protein uS17 (84 aa).

This sequence belongs to the universal ribosomal protein uS17 family. In terms of assembly, part of the 30S ribosomal subunit.

Functionally, one of the primary rRNA binding proteins, it binds specifically to the 5'-end of 16S ribosomal RNA. In Vibrio parahaemolyticus serotype O3:K6 (strain RIMD 2210633), this protein is Small ribosomal subunit protein uS17.